A 651-amino-acid polypeptide reads, in one-letter code: Threonine--tRNA ligase (651 aa).

In terms of domain architecture, TGS spans 1-61 (MPTIQLPDGS…DKDVSLRIIT (61 aa)). The tract at residues 242–533 (DHRLLAKKMD…LLEESAGKLP (292 aa)) is catalytic. Cys333, His384, and His510 together coordinate Zn(2+). The segment at 631–651 (ISQRSRKSPAPSPLFPVGGES) is disordered.

Belongs to the class-II aminoacyl-tRNA synthetase family. In terms of assembly, homodimer. It depends on Zn(2+) as a cofactor.

It localises to the cytoplasm. It catalyses the reaction tRNA(Thr) + L-threonine + ATP = L-threonyl-tRNA(Thr) + AMP + diphosphate + H(+). Its function is as follows. Catalyzes the attachment of threonine to tRNA(Thr) in a two-step reaction: L-threonine is first activated by ATP to form Thr-AMP and then transferred to the acceptor end of tRNA(Thr). Also edits incorrectly charged L-seryl-tRNA(Thr). This Coxiella burnetii (strain RSA 493 / Nine Mile phase I) protein is Threonine--tRNA ligase.